The following is a 1050-amino-acid chain: TSC22 domain family protein 1 (1050 aa).

The interval 1-99 is required for interaction with TGFBR1 and promotion of TGF-beta signaling; it reads MHQPPESTAA…SQAQLQGQPL (99 aa). 8 disordered regions span residues 22-111, 126-285, 445-479, 511-531, 581-609, 720-740, 795-847, and 879-919; these read MAHP…KKSG, ISSN…VSSA, QTPT…SVGS, DFSS…VQLQ, LAQP…QLQY, VQPP…PPSS, QLPT…GSLV, and SLAQ…VSDG. Residues 38–55 are compositionally biased toward low complexity; sequence ASALSAAGTGVSGAAPSS. Residues 58-71 show a composition bias toward pro residues; the sequence is FPPPSSLLQPPPPA. A compositionally biased stretch (low complexity) spans 85-97; the sequence is SLNLLSQAQLQGQ. The segment covering 134-143 has biased composition (acidic residues); sequence EDTESYDDLD. A compositionally biased stretch (basic residues) spans 217–241; the sequence is HPHHLHHHHHIHHGHHLHHGHHHSS. S265 carries the post-translational modification Phosphoserine. The span at 458–476 shows a compositional bias: low complexity; that stretch reads TSGSSVSSSVSTLSHYTES. Residues 586–603 are compositionally biased toward pro residues; it reads LPYPQPAPPVQTPLPGAP. Residues 906 to 919 are compositionally biased toward low complexity; that stretch reads LSGDSGGVSAVSDG. The tract at residues 983–1004 is leucine-zipper; that stretch reads LKEQIKELIEKNSQLEQENNLL. The interval 1015-1050 is disordered; it reads QFQAQLQTGSPPATTQPQGTTQPPAQPASQGSGSTA. A compositionally biased stretch (low complexity) spans 1021-1050; that stretch reads QTGSPPATTQPQGTTQPPAQPASQGSGSTA.

It belongs to the TSC-22/Dip/Bun family. As to quaternary structure, forms homodimers. Forms heterodimers. Component of a complex composed of TSC22D1 (via N-terminus), TGFBR1 and TGFBR2; the interaction between TSC22D1 and TGFBR1 is inhibited by SMAD7 and promoted by TGFB1. Interacts with SMAD7; the interaction requires TGF-beta and the interaction is inhibited by TGFBR1. Interacts with TPT1/fortilin; interaction results in the destabilization of TSC22D1 protein and prevents TSC22D1-mediated apoptosis. Interacts with SMAD4 (via N-terminus). Interacts with ACVRL1/ALK1, ACVR1/ALK2, BMPR1A/ALK3, ACVR1B/ALK4, BMPR1B/ALK6, ACVR2A/ACTRII, and BMPR2. Interacts with SMAD6. Interacts with TFE3; the interaction is enhanced in the presence of TGF-beta. Forms a heterodimer with TSC22D4/THG1. In terms of assembly, forms a heterodimer with TSC22D4/THG1. Interacts with histone H1-2. Interacts with GNL3. As to expression, ubiquitously expressed, abundantly expressed in testis, ovary, uterus, and lung. Expressed in cardiomyocytes.

It localises to the cytoplasm. The protein localises to the nucleus. The protein resides in the cell membrane. Its subcellular location is the mitochondrion. In terms of biological role, transcriptional repressor. Acts on the C-type natriuretic peptide (CNP) promoter. Acts to promote CASP3-mediated apoptosis. Positively regulates TGF-beta signaling by interacting with SMAD7 which inhibits binding of SMAD7 to TGFBR1, preventing recruitment of SMURF ubiquitin ligases to TGFBR1 and inhibiting SMURF-mediated ubiquitination and degradation of TGFBR1. Contributes to enhancement of TGF-beta signaling by binding to and modulating the transcription activator activity of SMAD4. Promotes TGF-beta-induced transcription of COL1A2; via its interaction with TFE3 at E-boxes in the gene proximal promoter. Plays a role in the repression of hematopoietic precursor cell growth. Promotes IL2 deprivation-induced apoptosis in T-lymphocytes, via repression of TSC22D3/GILZ transcription and activation of the caspase cascade. Functionally, may act to negatively regulate TGFB3 signaling and thereby inhibit cell death in mammary gland cells. Its function is as follows. Positively regulates cell death in response to TGFB3 during mammary gland involution. This Rattus norvegicus (Rat) protein is TSC22 domain family protein 1.